The primary structure comprises 449 residues: UDP-N-acetylmuramoylalanine--D-glutamate ligase (449 aa).

119–125 (GTNGKTT) provides a ligand contact to ATP.

This sequence belongs to the MurCDEF family.

Its subcellular location is the cytoplasm. It carries out the reaction UDP-N-acetyl-alpha-D-muramoyl-L-alanine + D-glutamate + ATP = UDP-N-acetyl-alpha-D-muramoyl-L-alanyl-D-glutamate + ADP + phosphate + H(+). The protein operates within cell wall biogenesis; peptidoglycan biosynthesis. Cell wall formation. Catalyzes the addition of glutamate to the nucleotide precursor UDP-N-acetylmuramoyl-L-alanine (UMA). The polypeptide is UDP-N-acetylmuramoylalanine--D-glutamate ligase (Lactococcus lactis subsp. cremoris (strain MG1363)).